The following is a 38-amino-acid chain: Photosystem I reaction center subunit VIII (38 aa).

A helical transmembrane segment spans residues 12 to 32; it reads WILIPIIGWLMPAVVMGLLFL.

It belongs to the PsaI family.

It is found in the cellular thylakoid membrane. Functionally, may help in the organization of the PsaL subunit. The protein is Photosystem I reaction center subunit VIII of Gloeothece citriformis (strain PCC 7424) (Cyanothece sp. (strain PCC 7424)).